The sequence spans 293 residues: Probable metal transport system membrane protein CT_417 (293 aa).

7 helical membrane-spanning segments follow: residues 18 to 38, 41 to 61, 68 to 88, 101 to 121, 135 to 155, 187 to 207, and 242 to 262; these read SLLAAFGASIAAGIIGSYIVV, IVSISGSIAHSILGGVGIALW, LPISPLHGAIASAIFVAICIG, IISMIWSIGMAIGIICISKLP, ILWVTPQDLYFLGILDLFIVA, LLLILTAITTVVLMYVMGVIL, and FLGIMLAYLLDLPVGPVIAIL.

Belongs to the ABC-3 integral membrane protein family.

The protein resides in the cell inner membrane. In terms of biological role, part of an ATP-driven transport system CT_415/CT_416/CT_417 for a metal. In Chlamydia trachomatis serovar D (strain ATCC VR-885 / DSM 19411 / UW-3/Cx), this protein is Probable metal transport system membrane protein CT_417.